The following is a 188-amino-acid chain: Ribosome-recycling factor (188 aa).

Belongs to the RRF family.

Its subcellular location is the cytoplasm. Its function is as follows. Responsible for the release of ribosomes from messenger RNA at the termination of protein biosynthesis. May increase the efficiency of translation by recycling ribosomes from one round of translation to another. This is Ribosome-recycling factor from Phenylobacterium zucineum (strain HLK1).